Reading from the N-terminus, the 261-residue chain is Epidermal growth factor-binding protein type B (261 aa).

A signal peptide spans 1–16; that stretch reads MWFLILFLALSLGGID. Positions 17-24 are cleaved as a propeptide — activation peptide; the sequence is AAPPLQSR. The region spanning 25 to 258 is the Peptidase S1 domain; sequence VVGGFNCKKN…FNSWIKDTMM (234 aa). 5 disulfide bridges follow: Cys31/Cys173, Cys50/Cys66, Cys152/Cys219, Cys184/Cys198, and Cys209/Cys234. The active-site Charge relay system is His65. Asn102 carries N-linked (GlcNAc...) asparagine glycosylation. Asp120 serves as the catalytic Charge relay system. Ser213 acts as the Charge relay system in catalysis.

It belongs to the peptidase S1 family. Kallikrein subfamily.

It carries out the reaction Hydrolyzes mouse Ren2 protein (a species of prorenin present in the submandibular gland) on the carboxy side of the arginine residue at the Lys-Arg-|- pair in the N-terminus, to yield mature renin.. In terms of biological role, cleaves REN2 at a dibasic site to yield mature renin. This is Epidermal growth factor-binding protein type B (Egfbp2) from Mus musculus (Mouse).